The sequence spans 324 residues: Phospho-N-acetylmuramoyl-pentapeptide-transferase (324 aa).

10 consecutive transmembrane segments (helical) span residues 5–25, 52–72, 77–97, 117–137, 147–167, 176–196, 202–222, 227–247, 253–273, and 302–322; these read GLLV…PLFI, PTMG…IMAI, LGAE…IGFL, LLGQ…QGFD, ITFD…IGGS, LDGL…IIAV, AVAI…VFNA, VFMG…VAIL, LLVI…IQVI, and VVVT…YIGV.

Belongs to the glycosyltransferase 4 family. MraY subfamily. Mg(2+) serves as cofactor.

Its subcellular location is the cell membrane. It catalyses the reaction UDP-N-acetyl-alpha-D-muramoyl-L-alanyl-gamma-D-glutamyl-meso-2,6-diaminopimeloyl-D-alanyl-D-alanine + di-trans,octa-cis-undecaprenyl phosphate = di-trans,octa-cis-undecaprenyl diphospho-N-acetyl-alpha-D-muramoyl-L-alanyl-D-glutamyl-meso-2,6-diaminopimeloyl-D-alanyl-D-alanine + UMP. It participates in cell wall biogenesis; peptidoglycan biosynthesis. In terms of biological role, catalyzes the initial step of the lipid cycle reactions in the biosynthesis of the cell wall peptidoglycan: transfers peptidoglycan precursor phospho-MurNAc-pentapeptide from UDP-MurNAc-pentapeptide onto the lipid carrier undecaprenyl phosphate, yielding undecaprenyl-pyrophosphoryl-MurNAc-pentapeptide, known as lipid I. The protein is Phospho-N-acetylmuramoyl-pentapeptide-transferase of Bacillus cytotoxicus (strain DSM 22905 / CIP 110041 / 391-98 / NVH 391-98).